The following is a 179-amino-acid chain: Pyridoxal 5'-phosphate synthase subunit PdxT (179 aa).

L-glutamine is bound at residue 48–50 (GES). The Nucleophile role is filled by Cys-79. Residues Arg-101 and 127–128 (IR) contribute to the L-glutamine site. Active-site charge relay system residues include His-163 and Glu-165.

This sequence belongs to the glutaminase PdxT/SNO family. In terms of assembly, in the presence of PdxS, forms a dodecamer of heterodimers. Only shows activity in the heterodimer.

The catalysed reaction is aldehydo-D-ribose 5-phosphate + D-glyceraldehyde 3-phosphate + L-glutamine = pyridoxal 5'-phosphate + L-glutamate + phosphate + 3 H2O + H(+). It carries out the reaction L-glutamine + H2O = L-glutamate + NH4(+). It participates in cofactor biosynthesis; pyridoxal 5'-phosphate biosynthesis. Functionally, catalyzes the hydrolysis of glutamine to glutamate and ammonia as part of the biosynthesis of pyridoxal 5'-phosphate. The resulting ammonia molecule is channeled to the active site of PdxS. The protein is Pyridoxal 5'-phosphate synthase subunit PdxT of Francisella tularensis subsp. novicida (strain U112).